The chain runs to 413 residues: Transmembrane protein 237B (413 aa).

The tract at residues 1–162 (MDPEAKVSSS…EDDDVITDPQ (162 aa)) is disordered. Residues 112 to 122 (DLVSNGDTLDQ) are compositionally biased toward polar residues. 4 helical membrane-spanning segments follow: residues 233 to 253 (VIGLFSHGFLAGYAVWNIIVV), 274 to 294 (LAYPAQSLLYLLLALSTVSAF), 312 to 332 (LSPVALASVFYFSALVLSLSQ), and 360 to 380 (ILYPWITVNLVVSLLVGLAWI).

This sequence belongs to the TMEM237 family.

The protein resides in the membrane. It localises to the cell projection. The protein localises to the cilium. Its function is as follows. Component of the transition zone in primary cilia. Required for ciliogenesis. This Danio rerio (Zebrafish) protein is Transmembrane protein 237B (tmem237b).